Consider the following 72-residue polypeptide: Translation initiation factor IF-1 (72 aa).

Residues 1–72 (MAKEDCIEMQ…SKARIIFRAR (72 aa)) enclose the S1-like domain.

The protein belongs to the IF-1 family. Component of the 30S ribosomal translation pre-initiation complex which assembles on the 30S ribosome in the order IF-2 and IF-3, IF-1 and N-formylmethionyl-tRNA(fMet); mRNA recruitment can occur at any time during PIC assembly.

The protein resides in the cytoplasm. In terms of biological role, one of the essential components for the initiation of protein synthesis. Stabilizes the binding of IF-2 and IF-3 on the 30S subunit to which N-formylmethionyl-tRNA(fMet) subsequently binds. Helps modulate mRNA selection, yielding the 30S pre-initiation complex (PIC). Upon addition of the 50S ribosomal subunit IF-1, IF-2 and IF-3 are released leaving the mature 70S translation initiation complex. This is Translation initiation factor IF-1 from Actinobacillus pleuropneumoniae serotype 5b (strain L20).